Here is a 165-residue protein sequence, read N- to C-terminus: Shikimate kinase (165 aa).

11 to 16 contributes to the ATP binding site; it reads GAGKTT. T15 is a binding site for Mg(2+). Substrate-binding residues include D33, R57, and G78. Position 116 (R116) interacts with ATP. Position 134 (R134) interacts with substrate.

It belongs to the shikimate kinase family. As to quaternary structure, monomer. The cofactor is Mg(2+).

It is found in the cytoplasm. It catalyses the reaction shikimate + ATP = 3-phosphoshikimate + ADP + H(+). It participates in metabolic intermediate biosynthesis; chorismate biosynthesis; chorismate from D-erythrose 4-phosphate and phosphoenolpyruvate: step 5/7. Its function is as follows. Catalyzes the specific phosphorylation of the 3-hydroxyl group of shikimic acid using ATP as a cosubstrate. The polypeptide is Shikimate kinase (Bacillus anthracis (strain A0248)).